The chain runs to 222 residues: Large ribosomal subunit protein uL1 (222 aa).

Belongs to the universal ribosomal protein uL1 family. Part of the 50S ribosomal subunit.

Its function is as follows. Binds directly to 23S rRNA. Probably involved in E site tRNA release. Functionally, protein L1 is also a translational repressor protein, it controls the translation of its operon by binding to its mRNA. The sequence is that of Large ribosomal subunit protein uL1 from Pyrobaculum islandicum (strain DSM 4184 / JCM 9189 / GEO3).